Reading from the N-terminus, the 939-residue chain is Zinc finger RNA-binding protein 2 (939 aa).

Disordered regions lie at residues 1 to 72, 116 to 185, 217 to 264, 289 to 314, 360 to 389, 401 to 449, 545 to 590, and 906 to 939; these read MATS…AYGS, GRMT…IVTS, FYPP…PKAG, HLGG…SPRG, LEPA…ASSR, ALCE…DAQP, RLEE…SSDD, and RLGA…EGLV. Composition is skewed to polar residues over residues 137 to 147 and 157 to 184; these read PHGSHSHAQPP and QPAS…SIVT. Over residues 217–239 the composition is skewed to pro residues; that stretch reads FYPPAQPPPPPGPPQQLPPPPAP. Residues 516–549 adopt a coiled-coil conformation; sequence KVLEERMRKQRHLAEERLEQLRRWHAERRRLEEE. Residues 570 to 935 form the DZF domain; the sequence is RPESPASAPL…GEKKRGRRGG (366 aa). The segment covering 906 to 916 has biased composition (basic residues); sequence RLGARFRKRQR.

In Homo sapiens (Human), this protein is Zinc finger RNA-binding protein 2 (ZFR2).